The sequence spans 304 residues: UDP-N-acetylenolpyruvoylglucosamine reductase (304 aa).

Residues 28-193 (KTGGPADYLA…LTATFALTPG (166 aa)) form the FAD-binding PCMH-type domain. Arg172 is an active-site residue. The active-site Proton donor is Ser222. Glu292 is an active-site residue.

Belongs to the MurB family. FAD serves as cofactor.

It is found in the cytoplasm. The catalysed reaction is UDP-N-acetyl-alpha-D-muramate + NADP(+) = UDP-N-acetyl-3-O-(1-carboxyvinyl)-alpha-D-glucosamine + NADPH + H(+). It functions in the pathway cell wall biogenesis; peptidoglycan biosynthesis. Its function is as follows. Cell wall formation. The sequence is that of UDP-N-acetylenolpyruvoylglucosamine reductase from Levilactobacillus brevis (strain ATCC 367 / BCRC 12310 / CIP 105137 / JCM 1170 / LMG 11437 / NCIMB 947 / NCTC 947) (Lactobacillus brevis).